Consider the following 1373-residue polypeptide: DNA-directed RNA polymerase subunit beta (1373 aa).

The protein belongs to the RNA polymerase beta chain family. The RNAP catalytic core consists of 2 alpha, 1 beta, 1 beta' and 1 omega subunit. When a sigma factor is associated with the core the holoenzyme is formed, which can initiate transcription.

It catalyses the reaction RNA(n) + a ribonucleoside 5'-triphosphate = RNA(n+1) + diphosphate. In terms of biological role, DNA-dependent RNA polymerase catalyzes the transcription of DNA into RNA using the four ribonucleoside triphosphates as substrates. The protein is DNA-directed RNA polymerase subunit beta of Rickettsia peacockii (strain Rustic).